Consider the following 243-residue polypeptide: MLPFWIALQFLGSLPIRLPGMPRPEELGRSLLFYPLVGVVFGMLLLGFSALLSGTPLMLHAALVLSAWVLLSGGLHLDGLADSADAWLGGFGDRERTLQIMKDPRSGPIAVVTLVLVLLLKFAAILALIESHSSIGLLLAPVIGRAAMLGLFLGTPYVRSGGLGQALADHLPRGPGRKVLAATAIACVLLAGWSGVAVLLVCAVCFFWLRQLMMRRLGGCTGDTAGALLELLELAVLLTLALL.

5 helical membrane-spanning segments follow: residues 31–51, 57–77, 109–129, 135–155, and 188–208; these read LLFY…FSAL, LMLH…GLHL, IAVV…LALI, IGLL…FLGT, and VLLA…CFFW.

Belongs to the CobS family. The cofactor is Mg(2+).

The protein localises to the cell inner membrane. The catalysed reaction is alpha-ribazole + adenosylcob(III)inamide-GDP = adenosylcob(III)alamin + GMP + H(+). The enzyme catalyses alpha-ribazole 5'-phosphate + adenosylcob(III)inamide-GDP = adenosylcob(III)alamin 5'-phosphate + GMP + H(+). It functions in the pathway cofactor biosynthesis; adenosylcobalamin biosynthesis; adenosylcobalamin from cob(II)yrinate a,c-diamide: step 7/7. Functionally, joins adenosylcobinamide-GDP and alpha-ribazole to generate adenosylcobalamin (Ado-cobalamin). Also synthesizes adenosylcobalamin 5'-phosphate from adenosylcobinamide-GDP and alpha-ribazole 5'-phosphate. This Pseudomonas savastanoi pv. phaseolicola (strain 1448A / Race 6) (Pseudomonas syringae pv. phaseolicola (strain 1448A / Race 6)) protein is Adenosylcobinamide-GDP ribazoletransferase.